A 108-amino-acid chain; its full sequence is Inner membrane protein H108R (108 aa).

Residues leucine 10 to leucine 32 form a helical membrane-spanning segment. A compositionally biased stretch (polar residues) spans glutamate 49–serine 64. The tract at residues glutamate 49–lysine 69 is disordered. Asparagine 50 and asparagine 62 each carry an N-linked (GlcNAc...) asparagine; by host glycan.

The protein belongs to the asfivirus H108R family.

It is found in the virion membrane. In African swine fever virus (strain Badajoz 1971 Vero-adapted) (Ba71V), this protein is Inner membrane protein H108R.